We begin with the raw amino-acid sequence, 142 residues long: Ribonuclease VapC44 (142 aa).

In terms of domain architecture, PINc spans 4 to 126; the sequence is LLDVNVLLAL…GRFVTFDQSI (123 aa). Mg(2+) contacts are provided by D6 and D105.

This sequence belongs to the PINc/VapC protein family. Mg(2+) is required as a cofactor.

Toxic component of a type II toxin-antitoxin (TA) system. An RNase. Its cognate antitoxin is VapB44. This chain is Ribonuclease VapC44, found in Mycobacterium tuberculosis (strain CDC 1551 / Oshkosh).